The following is a 1240-amino-acid chain: MNRAREELDRYRETLEEVSSRFVDVATKARQRREDPKPEPEVMLATSIGERVEGLLQVENVADRLEELEEELGDREEATFRIVEEVIKGELKVKGDLPLHKRIDYAVRIGLAVLTEAVVSAPLEGIAAVEIRERGTGHRVVDESEPPHEEPKLVCTECGKEVDPENCYLAVKYAGPIRAAGGTAAALSALLADYARQVAGLPRFNPDDFDHDLVGRYVEEVVTYLDKVGSFQYNPSEEEVELVAKNIPIEIDGEPTEEVEVQGHRDIPHLPNQLRGGALLVICEGICQKAPKLIKRVEKYGIDGWEFLEKLVNKGSDDEEEGEEEKTKIKPNDKYMGELVAGRPLLSHPSAKGGFRLRYGRARNTGFAAVGVHPSLMYVTKGFIVIGTQLKVERPGKAACVLPVTEIEPPVVKLRDGSVVRLDDPREAKELVEKDEIEEILDLGEMLVAVGEFIENNHPLVPPAYCPEWWVKEVPDVVKVIGLRKNLPNDVFEKLKDVPLKRLVKEASRLSGNGNNLDGFLNGPVKVARSIVELVRKEVIPRLSSPERMSVEEAIELSREYGVPFHPKYTFLWHDVKPKDVDELREALEVAGSEWGNLRVEFENDGEIKRILEDLLVPHRLEDDTIVVEEPWASALLAQLGYDPESGEFREQDEDLDYLLDYLVIRDETCRYVSKLAGFPIREKAPTRIGARMGRPEKARERKMSPPPHVLFPIGIAGGNQRDIMKFHRGESEDTDRVEVCYRICPECDRLVPYRVCPFCGTETVQYCNRCDEPADECDCEEPDPVVRADIERNDDPYSSLPVRELVRRAEEEVGTTDTLKGVKGMTSRLKMPEPLQKGILRAKRDLFVFKDGTLRFDCNDCPLTHVRLKEVGLTPFKARLLGFERDINGDPVVSEDQVVELYPQDVVLPRKAAEWAVRVCQYLDDLLRKYYGLEPVYGVEKPEDLIGHLIVTLAPHTSCGVVGRVVGIADINCWYNHPIINAARRRNCDGDEDAFMLLLDVLLNFSRLYLPDKRGGLMDAPLVLTAVVDPYEIDDEVWNMDVCGDYPLELYRKALEYADAGEAEELIERLEDRLDLPRGLQFTHDTEAIDLGPTVTRYSRLEKMEEKLEEQLDLARRIRAVDESDVAKIVLDSHFLPDIKGNLRKFGRQKFRCSRCNAKFNVPPLSGKCPRCGGDVLLTIYPATATKYLEPAKRLVEEFGTHDEEWRTIASEVELLEEEAKTLFGSDHSVSLKKFFGET.

It belongs to the archaeal DNA polymerase II family. As to quaternary structure, heterodimer of a large subunit and a small subunit.

It catalyses the reaction DNA(n) + a 2'-deoxyribonucleoside 5'-triphosphate = DNA(n+1) + diphosphate. It carries out the reaction Exonucleolytic cleavage in the 3'- to 5'-direction to yield nucleoside 5'-phosphates.. Functionally, possesses two activities: a DNA synthesis (polymerase) and an exonucleolytic activity that degrades single-stranded DNA in the 3'- to 5'-direction. Has a template-primer preference which is characteristic of a replicative DNA polymerase. This is DNA polymerase II large subunit from Methanopyrus kandleri (strain AV19 / DSM 6324 / JCM 9639 / NBRC 100938).